Here is a 179-residue protein sequence, read N- to C-terminus: MAELATIARPYADALYKAQGSDLATTALWVDKLAAVAGNAQLLQFADSPKVSVDQVFDVVAGVASNANDPLPEAARNFLRLVIENGRLSALPEIASQFRSLKNAAGGMTDAVVFSAFPMDEQALNDIAAVLEKRFGRKLGIKVELDPSLIGGIRAVVGDEVLDTSVKARLEQMKMALIA.

Belongs to the ATPase delta chain family. F-type ATPases have 2 components, F(1) - the catalytic core - and F(0) - the membrane proton channel. F(1) has five subunits: alpha(3), beta(3), gamma(1), delta(1), epsilon(1). F(0) has three main subunits: a(1), b(2) and c(10-14). The alpha and beta chains form an alternating ring which encloses part of the gamma chain. F(1) is attached to F(0) by a central stalk formed by the gamma and epsilon chains, while a peripheral stalk is formed by the delta and b chains.

It localises to the cell inner membrane. Its function is as follows. F(1)F(0) ATP synthase produces ATP from ADP in the presence of a proton or sodium gradient. F-type ATPases consist of two structural domains, F(1) containing the extramembraneous catalytic core and F(0) containing the membrane proton channel, linked together by a central stalk and a peripheral stalk. During catalysis, ATP synthesis in the catalytic domain of F(1) is coupled via a rotary mechanism of the central stalk subunits to proton translocation. This protein is part of the stalk that links CF(0) to CF(1). It either transmits conformational changes from CF(0) to CF(1) or is implicated in proton conduction. This chain is ATP synthase subunit delta, found in Polaromonas naphthalenivorans (strain CJ2).